A 326-amino-acid polypeptide reads, in one-letter code: MASEVEEQIPVREEFFLCGGVETKIIKCGPWTNLFEKQDVSKPKQLIFIIPGNPGYSAFYVPFAKALYTLMKSRFPVWIISHAGFSVTPKDKKVLAAPQEESNAQKIEDVYGLNGQIEHKIAFLRAHVPKDVKLILIGHSVGTYMTLHVMKRVLELPVAHAFLLFPTIERMSESPNGKFATPFLCQFRYLLYATSYLLFKPCPEVIKSFIIQKLMGQMNIKLELPLTDILQPFCLANAAYLGSQEMVQIVKRDDDIIKEFLPKLKFYYGKTDGWCPVKYYEDMKKDFPEGNIYLCEKGIPHAFVLDFSQEMATIVAEWINNRPPRK.

The active-site Nucleophile is the S140. Residues D272 and H301 each act as charge relay system in the active site.

The protein belongs to the AB hydrolase superfamily. LDAH family. Expressed in liver, adrenal gland, prostate, spleen, kidney, brown and white adipose tissue, testis and to a lesser extent in brain (at protein level). Expressed in peritoneal macrophages and bone marrow-derived macrophages (at protein level). Highly expressed in macrophage and foam cell-rich areas in atherosclerotic lesions (at protein level). mRNA, but no protein, expressed in heart and muscle.

The protein resides in the lipid droplet. It is found in the endoplasmic reticulum. The enzyme catalyses a cholesterol ester + H2O = cholesterol + a fatty acid + H(+). Its function is as follows. Probable serine lipid hydrolase associated with lipid droplets. Has low cholesterol esterase activity. Appears to lack triglyceride lipase activity. Involved in cholesterol and triglyceride homeostasis; stimulates cellular triglyceride accumulation and cellular cholesterol release. Acts antagonistically with PNPLA2/ATGL in regulation of cellular lipid stores. May regulate triglyceride accumulation indirectly through stimulation of PNPLA2/ATGL ubiquitination and proteasomal degradation. Promotes microtubule-dependent lipid droplet fusion. Highly expressed in macrophage-rich areas in atherosclerotic lesions, suggesting that it could promote cholesterol ester turnover in macrophages. In terms of biological role, stimulates cellular triglyceride accumulation and lipid droplet fusion. Functionally, associates with lipid droplets but does not stimulate cellular triglyceride accumulation, lipid droplet fusion or ATGL proteasomal degradation. The sequence is that of Lipid droplet-associated hydrolase from Mus musculus (Mouse).